The following is a 502-amino-acid chain: Glutamate--tRNA ligase (502 aa).

The 'HIGH' region signature appears at 9 to 19 (PSPTGFPHVGT). A 'KMSKS' region motif is present at residues 250-254 (KLSKR). An ATP-binding site is contributed by Lys-253.

Belongs to the class-I aminoacyl-tRNA synthetase family. Glutamate--tRNA ligase type 1 subfamily. Monomer.

The protein resides in the cytoplasm. It catalyses the reaction tRNA(Glu) + L-glutamate + ATP = L-glutamyl-tRNA(Glu) + AMP + diphosphate. In terms of biological role, catalyzes the attachment of glutamate to tRNA(Glu) in a two-step reaction: glutamate is first activated by ATP to form Glu-AMP and then transferred to the acceptor end of tRNA(Glu). The chain is Glutamate--tRNA ligase from Acinetobacter baumannii (strain SDF).